The chain runs to 639 residues: MGKIIGIDLGTTNSCVSVFEGNEPVVIANSEGKRTTPSIVAFVDGGERKVGDPAKRQAITNPTRTIFSIKRFMGENWDQVQKEIARVPYKVVKGDNNTPRVDIDGRLYTPQEISAMILQKMKKTAEDYLGQEVTEAVITVPAYFSDSQRQATKEAGQIAGLEVKRIVNEPTAAALAYGLDKAHKDMKIAVFDLGGGTFDISILEFGGGVFEVLSTNGDTHLGGDDFDQVIIDWLVQEFKNDEGADLTQDPMAMQRLKEAAEKAKIELSSSTSTEINLPYIMPVGGVPKHLVKTLTRAKFESLAHNLIQACLEPCKKAMQDAGLSNSDIDEVILVGGSSRIPAVQKLVEDFFGKTPSKGVNPDEVVAVGAAVQGAVLTDEIKGVVLLDVTPLSMGIETLGGVMTKLIDANTTIPARKSETFSTAADNQTEVTIHVLQGERPMAAQNKSIGQFNLTGIAPARRGVPQIEVTFDIDANGILKVSAKDKATGKEQAIRIEASSGLSKEEIEKMKAEAEANAEADKKEREKIDKLNQADSLIFQTETQLKELGDKLPADKKAPIEAALQKLKDAHKAQDMTTIDSAMAELNTAFQAASAEMYAQSGAQGGAQAGPDMNAGQSNAGQNNGKQDDNVQDADFEEVK.

Residue Thr197 is modified to Phosphothreonine; by autocatalysis. The disordered stretch occupies residues 600-639; sequence SGAQGGAQAGPDMNAGQSNAGQNNGKQDDNVQDADFEEVK. A compositionally biased stretch (low complexity) spans 613–624; it reads NAGQSNAGQNNG. A compositionally biased stretch (acidic residues) spans 629-639; that stretch reads NVQDADFEEVK.

This sequence belongs to the heat shock protein 70 family.

Functionally, acts as a chaperone. In Bacteroides fragilis (strain ATCC 25285 / DSM 2151 / CCUG 4856 / JCM 11019 / LMG 10263 / NCTC 9343 / Onslow / VPI 2553 / EN-2), this protein is Chaperone protein DnaK.